The sequence spans 499 residues: Glutamyl-tRNA(Gln) amidotransferase subunit B, chloroplastic/mitochondrial (499 aa).

Belongs to the GatB/GatE family. GatB subfamily. Subunit of the heterotrimeric GatCAB amidotransferase (AdT) complex, composed of A, B and C subunits.

The protein localises to the mitochondrion. It is found in the plastid. Its subcellular location is the chloroplast. It carries out the reaction L-glutamyl-tRNA(Gln) + L-glutamine + ATP + H2O = L-glutaminyl-tRNA(Gln) + L-glutamate + ADP + phosphate + H(+). Functionally, allows the formation of correctly charged Gln-tRNA(Gln) through the transamidation of misacylated Glu-tRNA(Gln) in chloroplasts and mitochondria. The reaction takes place in the presence of glutamine and ATP through an activated gamma-phospho-Glu-tRNA(Gln). This chain is Glutamyl-tRNA(Gln) amidotransferase subunit B, chloroplastic/mitochondrial, found in Ostreococcus lucimarinus (strain CCE9901).